The primary structure comprises 85 residues: Small ribosomal subunit protein uS17 (85 aa).

The protein belongs to the universal ribosomal protein uS17 family. Part of the 30S ribosomal subunit.

Its function is as follows. One of the primary rRNA binding proteins, it binds specifically to the 5'-end of 16S ribosomal RNA. This is Small ribosomal subunit protein uS17 from Acetivibrio thermocellus (strain ATCC 27405 / DSM 1237 / JCM 9322 / NBRC 103400 / NCIMB 10682 / NRRL B-4536 / VPI 7372) (Clostridium thermocellum).